The primary structure comprises 493 residues: Amphoterin-induced protein 1 (493 aa).

The signal sequence occupies residues 1 to 27 (MHPHRDPRGLWLLLPSLSLLLFEVARA). One can recognise an LRRNT domain in the interval 28–61 (GRAVVSCPAACLCASNILSCSKQQLPNVPHSLPS). Residues 28 to 372 (GRAVVSCPAA…LHGHHDTLNT (345 aa)) are Extracellular-facing. Intrachain disulfides connect C34–C40 and C38–C47. LRR repeat units lie at residues 62–83 (YTAL…WTPT), 87–108 (QLHS…AFSP), 111–132 (NLRY…LFSD), 135–156 (VLEV…AFDD), 159–179 (QLQK…ELVK), and 186–206 (KLTL…PDLQ). The N-linked (GlcNAc...) asparagine glycan is linked to N72. Residues 221–272 (NPLNCDCELYQLFSHWQYRQLSSVMDFQEDLYCMNSKKLHNVFNLSFLNCGE) enclose the LRRCT domain. 3 disulfides stabilise this stretch: C225/C253, C227/C270, and C290/C341. N-linked (GlcNAc...) asparagine glycosylation is found at N264, N315, N349, and N360. The Ig-like C2-type domain occupies 269–353 (NCGEYKERAW…MGETFNETLS (85 aa)). Residues 373 to 393 (AYTTLVGCILSVVLVLIYLYL) form a helical membrane-spanning segment. The Cytoplasmic segment spans residues 394–493 (TPCRCWCRGV…SVFSDTPIVV (100 aa)). Residues 405 to 493 (KPSSHQGDSL…SVFSDTPIVV (89 aa)) form a disordered region. Polar residues predominate over residues 408 to 424 (SHQGDSLSSSMLSTTPN). Positions 431 to 442 (GDKDDGFDRRVA) are enriched in basic and acidic residues. S477 and S481 each carry phosphoserine.

This sequence belongs to the immunoglobulin superfamily. AMIGO family. As to quaternary structure, homodimer, and heterodimer with AMIGO2 and AMIGO3. Interacts with KCNB1.

It is found in the cell membrane. The protein localises to the perikaryon. Its subcellular location is the cell projection. The protein resides in the dendrite. It localises to the axon. In terms of biological role, promotes growth and fasciculation of neurites from cultured hippocampal neurons. May be involved in fasciculation as well as myelination of developing neural axons. May have a role in regeneration as well as neural plasticity in the adult nervous system. May mediate homophilic as well as heterophilic cell-cell interaction and contribute to signal transduction through its intracellular domain. Assembled with KCNB1 modulates the gating characteristics of the delayed rectifier voltage-dependent potassium channel KCNB1. This is Amphoterin-induced protein 1 from Homo sapiens (Human).